The chain runs to 227 residues: MINDQLPRWVREARVGTRTGGPAMRPKTSDSPYFGWDSEDWPEVTRQLLSEQPLSGDTLVDAVLASWESIFESRLGSGFHIGTQIRPTPQVMGFLLHALIPLELANGDPSWRADLNSSEKDLVYQPDHKYSIEMKTSSHKDQIFGNRSFGVENPGKGKKAKDGYYVAVNFEKWSDAPGRLPRIRTIRYGWLDHTDWVAQKSQTGQQSSLPAVVSNTQLLAIHTGGQR.

The disordered stretch occupies residues 12–35; that stretch reads EARVGTRTGGPAMRPKTSDSPYFG.

The catalysed reaction is Endonucleolytic cleavage of DNA to give specific double-stranded fragments with terminal 5'-phosphates.. In terms of biological role, a P subtype restriction enzyme that recognizes the double-stranded sequence 5'-AGTACT-3' and cleaves after T-3. This is Type II restriction enzyme ScaI from Streptomyces caespitosus.